Here is a 788-residue protein sequence, read N- to C-terminus: Cadherin-10 (788 aa).

An N-terminal signal peptide occupies residues 1-22 (MTIHQFLLLFLFWVCLPHFCSP). Residues 23–54 (EIMFRRTPVPQQRILSSRVPRSDGKILHRQKR) constitute a propeptide that is removed on maturation. 5 consecutive Cadherin domains span residues 55–160 (GWMW…EPTF), 161–269 (PEEI…PPRF), 270–384 (PQNT…PPVF), 385–487 (SRSS…DNAP), and 488–606 (QFAV…LLLP). Topologically, residues 55 to 613 (GWMWNQFFLL…LLPAGLSTGA (559 aa)) are extracellular. An N-linked (GlcNAc...) asparagine glycan is attached at Asn-256. Residues Asn-438, Asn-456, and Asn-534 are each glycosylated (N-linked (GlcNAc...) asparagine). Residues 614-634 (LIAILLCIIILLVIVVLFAAL) traverse the membrane as a helical segment. The Cytoplasmic segment spans residues 635-788 (KRQRKKEPLI…YGGGESDKDS (154 aa)). Ser-784 and Ser-788 each carry phosphoserine.

In terms of tissue distribution, predominantly expressed in brain. Also found in adult and fetal kidney. Very low levels detected in prostate and fetal lung.

It localises to the cell membrane. Its function is as follows. Cadherins are calcium-dependent cell adhesion proteins. They preferentially interact with themselves in a homophilic manner in connecting cells; cadherins may thus contribute to the sorting of heterogeneous cell types. This is Cadherin-10 (CDH10) from Homo sapiens (Human).